We begin with the raw amino-acid sequence, 291 residues long: Secretory carrier-associated membrane protein 5 (291 aa).

A compositionally biased stretch (basic and acidic residues) spans 1 to 10 (MGGRYDRNTF). The tract at residues 1–66 (MGGRYDRNTF…GSGAQDLKKK (66 aa)) is disordered. Residues 1-126 (MGGRYDRNTF…EILVRLQRLQ (126 aa)) lie on the Cytoplasmic side of the membrane. A Phosphoserine modification is found at Ser-34. A coiled-coil region spans residues 58-94 (SGAQDLKKKEKELQAKEADLRRREQDLKRKQDAAARA). Helical transmembrane passes span 127–147 (YIAFATYLGLVLALFWNIIAV), 159–179 (IWLLAVIYFISGVPGGYVLWY), 194–214 (FGWFFLFYMLHILFCLFAAVA), and 242–262 (IFYFIGFGLFCLESVVSIWVI). Residues 263–288 (QQVYMYFRGSGKADDMRRDAARGAMR) lie on the Cytoplasmic side of the membrane.

It belongs to the SCAMP family.

The protein resides in the cell membrane. Its subcellular location is the cytoplasmic vesicle. It localises to the secretory vesicle membrane. Functionally, probably involved in membrane trafficking. This Arabidopsis thaliana (Mouse-ear cress) protein is Secretory carrier-associated membrane protein 5 (SCAMP5).